The following is a 457-amino-acid chain: Oxysterol-binding protein-related protein 3C (457 aa).

Disordered regions lie at residues 37-61 (NEGVEVINPEGGKEDAEEEAQKGRW) and 363-393 (QGDLSKAGSEKHSLEERQRAEKRTRETKGQK). Composition is skewed to basic and acidic residues over residues 47 to 61 (GGKEDAEEEAQKGRW) and 370 to 391 (GSEKHSLEERQRAEKRTRETKG).

It belongs to the OSBP family. Expressed in roots, leaves, stems and flowers.

In terms of biological role, may be involved in the transport of sterols. This chain is Oxysterol-binding protein-related protein 3C (ORP3C), found in Arabidopsis thaliana (Mouse-ear cress).